A 231-amino-acid chain; its full sequence is Staphylococcal superantigen-like 7 (231 aa).

The N-terminal stretch at 1 to 30 (MKLKTLAKATLALGLLTTGVITSEGQAVQA) is a signal peptide.

This sequence belongs to the staphylococcal/streptococcal toxin family. In terms of assembly, interacts with host IgA and complement C5; these interactions inhibits complement activation.

It is found in the secreted. Its function is as follows. Plays a role in the inhibition of host complement-mediated lysis and serum bactericidal activity by interacting with complement component C5. Affects all three pathways of complement activation and inhibits the cleavage of C5 by preventing its binding to C5 convertases. In turn, prevents C5a-mediated neutrophil migration. The protein is Staphylococcal superantigen-like 7 of Staphylococcus aureus (strain NCTC 8325 / PS 47).